The chain runs to 286 residues: MYLQDVIMKLNDFWASKGCLLEQPYDMEVGAGTFHPATFFGSLRKGPWKVAYVQPSRRPTDGRYGENPNRLQRYFQYQVIIKPSPENSQELYLESLEYLGINLKEHDIRFVEDNWESPTLGAWGVGWEVWLDGMEITQFTYFQQIGGISLKDIPLEITYGLERIAMYLQGVDNVYEVQWNENVKYGDVFLENEREFSVFNFEEANVGLLFRHFDEYEKEFYRLVEKNLYLPAYDYILKCSHTFNLLDARGAISVSQRQTYVKRIQAMARKAARVFLEVQANENSPA.

This sequence belongs to the class-II aminoacyl-tRNA synthetase family. Tetramer of two alpha and two beta subunits.

Its subcellular location is the cytoplasm. The catalysed reaction is tRNA(Gly) + glycine + ATP = glycyl-tRNA(Gly) + AMP + diphosphate. This is Glycine--tRNA ligase alpha subunit (glyQ) from Thermotoga maritima (strain ATCC 43589 / DSM 3109 / JCM 10099 / NBRC 100826 / MSB8).